We begin with the raw amino-acid sequence, 152 residues long: Transcriptional regulator MraZ (152 aa).

2 SpoVT-AbrB domains span residues 5–52 and 81–124; these read VNQL…PLPE and AQEL…DESL.

Belongs to the MraZ family. Forms oligomers.

Its subcellular location is the cytoplasm. It is found in the nucleoid. In Halorhodospira halophila (strain DSM 244 / SL1) (Ectothiorhodospira halophila (strain DSM 244 / SL1)), this protein is Transcriptional regulator MraZ.